The following is a 119-amino-acid chain: NADH-quinone oxidoreductase subunit A (119 aa).

Transmembrane regions (helical) follow at residues 7 to 27, 63 to 83, and 88 to 108; these read YPVL…VSIG, LVAI…PWGV, and IGWP…LGFA.

This sequence belongs to the complex I subunit 3 family. As to quaternary structure, NDH-1 is composed of 14 different subunits. Subunits NuoA, H, J, K, L, M, N constitute the membrane sector of the complex.

Its subcellular location is the cell inner membrane. It catalyses the reaction a quinone + NADH + 5 H(+)(in) = a quinol + NAD(+) + 4 H(+)(out). In terms of biological role, NDH-1 shuttles electrons from NADH, via FMN and iron-sulfur (Fe-S) centers, to quinones in the respiratory chain. The immediate electron acceptor for the enzyme in this species is believed to be ubiquinone. Couples the redox reaction to proton translocation (for every two electrons transferred, four hydrogen ions are translocated across the cytoplasmic membrane), and thus conserves the redox energy in a proton gradient. This chain is NADH-quinone oxidoreductase subunit A, found in Burkholderia mallei (strain NCTC 10247).